We begin with the raw amino-acid sequence, 902 residues long: Methionine--tRNA ligase, cytoplasmic (902 aa).

One can recognise a GST C-terminal domain in the interval 74-212 (GWEQDDLTNQ…QKQPQPQPPP (139 aa)). Residues 275–285 (PYVNNVPHLGN) carry the 'HIGH' region motif. The short motif at 595–599 (KFSKS) is the 'KMSKS' region element. Lysine 598 is an ATP binding site. Serine 827 carries the phosphoserine modification. Threonine 837 bears the Phosphothreonine mark. The WHEP-TRS domain occupies 843–899 (HIQTLTDEVTKQGNVVRELKAQKADKNQVAAEVAKLLDLKKQLALAEGKPIETPKGK).

It belongs to the class-I aminoacyl-tRNA synthetase family. In terms of assembly, monomer. Part of a multisubunit complex that groups tRNA ligases for Arg (RARS1), Asp (DARS1), Gln (QARS1), Ile (IARS1), Leu (LARS1), Lys (KARS1), Met (MARS1) the bifunctional ligase for Glu and Pro (EPRS1) and the auxiliary subunits AIMP1/p43, AIMP2/p38 and EEF1E1/p18. Forms a linear complex that contains MARS1, EEF1E1, EPRS1 and AIMP2 that is at the core of the multisubunit complex.

It is found in the cytoplasm. The protein resides in the cytosol. The protein localises to the nucleus. It localises to the nucleolus. The catalysed reaction is tRNA(Met) + L-methionine + ATP = L-methionyl-tRNA(Met) + AMP + diphosphate. Catalyzes the specific attachment of an amino acid to its cognate tRNA in a 2 step reaction: the amino acid (AA) is first activated by ATP to form AA-AMP and then transferred to the acceptor end of the tRNA. Plays a role in the synthesis of ribosomal RNA in the nucleolus. The polypeptide is Methionine--tRNA ligase, cytoplasmic (Mars1) (Mus musculus (Mouse)).